The chain runs to 784 residues: Armadillo repeat-containing X-linked protein 2 (784 aa).

The Mitochondrial intermembrane portion of the chain corresponds to 1 to 6 (MSRARD). 2 mitochondrion outer membrane (MOM)-targeting sequence regions span residues 1–6 (MSRARD) and 26–40 (KYTR…RLTK). The chain crosses the membrane as a helical; Signal-anchor span at residues 7 to 27 (AGCVAAGIVIGASAWYCVYKY). At 28–784 (TRGKDQKKKR…VKVIKLVNKF (757 aa)) the chain is on the cytoplasmic side. 3 disordered regions span residues 328–353 (TSGG…RTAS), 388–461 (HSGA…ELGM), and 488–522 (PESE…TIPM). Positions 396 to 418 (GTSGSSKTAATGKKAAPGAHTGA) are enriched in low complexity. Residues 488–508 (PESEEGESGWTDTESDSDSEP) are compositionally biased toward acidic residues. ARM repeat units follow at residues 528–568 (PYEI…NNAN), 570–609 (SCNQ…NLSE), and 650–689 (ITND…NFAE).

Belongs to the eutherian X-chromosome-specific Armcx family. As to expression, widely expressed in the adult nervous tissue, especially in the forebrain, including the cerebral cortex, hippocampus and thalamus.

The protein localises to the mitochondrion. Its subcellular location is the mitochondrion outer membrane. Its function is as follows. May regulate the dynamics and distribution of mitochondria in neural cells. The polypeptide is Armadillo repeat-containing X-linked protein 2 (Armcx2) (Mus musculus (Mouse)).